A 309-amino-acid polypeptide reads, in one-letter code: MSIRIVPQEQLEQNGKSTPEGHIPPLLFANLKSLYSSRAERLRQLAADHPLGDYLTFAAGVVEAQQKVLHDHPLQLDLSNVLTQSGERPPLDIAVFPRDRHWLTLLRALIEELKPDASGQVLSTLENLEKASEQELEEQATALLQHEFHAENNDKAPFIWAALSLFWAQMASLLPGKARAVPGEHRQFCPVCGSIPVSGVVQLGTSSGLRYLHCNLCESEWHMVRVKCSNCEESSDLNYWSLDSENSAIKAESCGHCGTYLKLLYQEKDHRVEAVADDLASLVLDVKMEEEGFSRSSINPFLFPESSIE.

Residues 1 to 22 (MSIRIVPQEQLEQNGKSTPEGH) form a disordered region.

Belongs to the FdhE family.

The protein localises to the cytoplasm. In terms of biological role, necessary for formate dehydrogenase activity. This Pectobacterium carotovorum subsp. carotovorum (strain PC1) protein is Protein FdhE homolog.